The sequence spans 149 residues: General odorant-binding protein 57c (149 aa).

The signal sequence occupies residues 1-16; the sequence is MLKLWLICILTVSVVS. 3 disulfide bridges follow: Cys-32–Cys-70, Cys-66–Cys-117, and Cys-106–Cys-126.

Belongs to the PBP/GOBP family.

In terms of biological role, present in the aqueous fluid surrounding olfactory sensory dendrites and are thought to aid in the capture and transport of hydrophobic odorants into and through this fluid. The sequence is that of General odorant-binding protein 57c from Drosophila melanogaster (Fruit fly).